We begin with the raw amino-acid sequence, 247 residues long: MNDKRYMLIIAICLIFLSILVYSIHFLIFGKVDYILSYFLLHLAFVPIEVLLVSLIIEKILDYREKKKILEKLNMVVGSFFNSVGEELLKIILEGDVGNIRDYLKISDEWNDKTYEETKKLLMNYDCNIDIEKIDLYKLKNLLERNKEFLLRLMENPLLLEHESFTELLLAVFHLADELHRREDLSNLPKSDLDHLKNDIIRVYKLLIIQWLNYLMHLKDNYPYLYSLCLRANPFDNKSIIIEEDDK.

The next 2 helical transmembrane spans lie at 9 to 29 (IIAI…FLIF) and 37 to 57 (SYFL…SLII).

It localises to the cell membrane. This is an uncharacterized protein from Methanocaldococcus jannaschii (strain ATCC 43067 / DSM 2661 / JAL-1 / JCM 10045 / NBRC 100440) (Methanococcus jannaschii).